A 307-amino-acid polypeptide reads, in one-letter code: Glutathione synthetase (307 aa).

In terms of domain architecture, ATP-grasp spans K120 to R304. A146–G202 lines the ATP pocket. Positions 275 and 277 each coordinate Mg(2+).

Belongs to the prokaryotic GSH synthase family. The cofactor is Mg(2+). Mn(2+) serves as cofactor.

The enzyme catalyses gamma-L-glutamyl-L-cysteine + glycine + ATP = glutathione + ADP + phosphate + H(+). It participates in sulfur metabolism; glutathione biosynthesis; glutathione from L-cysteine and L-glutamate: step 2/2. The chain is Glutathione synthetase from Parasynechococcus marenigrum (strain WH8102).